The primary structure comprises 87 residues: U3-theraphotoxin-Hhn1o (87 aa).

Positions 1 to 24 (MVNMKASMFLTFAGLVLLFVVCYA) are cleaved as a signal peptide. A propeptide spanning residues 25-52 (SESEEKEFPKEMLSSIFAVDNDFKQEER) is cleaved from the precursor. Cystine bridges form between Cys54/Cys67 and Cys61/Cys72.

Belongs to the neurotoxin 10 (Hwtx-1) family. 51 (Hntx-8) subfamily. Hntx-8 sub-subfamily. In terms of tissue distribution, expressed by the venom gland.

It is found in the secreted. Functionally, ion channel inhibitor. This Cyriopagopus hainanus (Chinese bird spider) protein is U3-theraphotoxin-Hhn1o.